The chain runs to 284 residues: Ribose-phosphate pyrophosphokinase 1 (284 aa).

34 to 36 is a binding site for ATP; that stretch reads DGE. Positions 126 and 163 each coordinate Mg(2+). K186 is an active-site residue. Residues R188, D211, and 215–219 each bind D-ribose 5-phosphate; that span reads STGGT.

Belongs to the ribose-phosphate pyrophosphokinase family. Class III (archaeal) subfamily. The cofactor is Mg(2+).

The protein resides in the cytoplasm. The catalysed reaction is D-ribose 5-phosphate + ATP = 5-phospho-alpha-D-ribose 1-diphosphate + AMP + H(+). It functions in the pathway metabolic intermediate biosynthesis; 5-phospho-alpha-D-ribose 1-diphosphate biosynthesis; 5-phospho-alpha-D-ribose 1-diphosphate from D-ribose 5-phosphate (route I): step 1/1. Its function is as follows. Involved in the biosynthesis of the central metabolite phospho-alpha-D-ribosyl-1-pyrophosphate (PRPP) via the transfer of pyrophosphoryl group from ATP to 1-hydroxyl of ribose-5-phosphate (Rib-5-P). The protein is Ribose-phosphate pyrophosphokinase 1 of Archaeoglobus fulgidus (strain ATCC 49558 / DSM 4304 / JCM 9628 / NBRC 100126 / VC-16).